Reading from the N-terminus, the 334-residue chain is Homoserine kinase (334 aa).

This sequence belongs to the pseudomonas-type ThrB family.

It catalyses the reaction L-homoserine + ATP = O-phospho-L-homoserine + ADP + H(+). It functions in the pathway amino-acid biosynthesis; L-threonine biosynthesis; L-threonine from L-aspartate: step 4/5. The polypeptide is Homoserine kinase (Cupriavidus taiwanensis (strain DSM 17343 / BCRC 17206 / CCUG 44338 / CIP 107171 / LMG 19424 / R1) (Ralstonia taiwanensis (strain LMG 19424))).